The primary structure comprises 223 residues: Adenylate kinase (223 aa).

ATP is bound at residue 10 to 15; that stretch reads GSGKGT. Residues 30 to 59 form an NMP region; sequence ESGAIFREHIGGGTELGMKAKGYIDKGELV. Residues serine 31, arginine 36, 57–59, 84–87, and glutamine 91 contribute to the AMP site; these read ELV and GFPR. Residues 125 to 164 are LID; the sequence is GRRLCANDPNHPNNIFIDAIKPNGDKCRVCGGDLKTRSDD. Arginine 126 contributes to the ATP binding site. 2 residues coordinate AMP: arginine 161 and arginine 173. ATP is bound at residue glycine 209.

This sequence belongs to the adenylate kinase family. Monomer.

The protein localises to the cytoplasm. It catalyses the reaction AMP + ATP = 2 ADP. Its pathway is purine metabolism; AMP biosynthesis via salvage pathway; AMP from ADP: step 1/1. Its function is as follows. Catalyzes the reversible transfer of the terminal phosphate group between ATP and AMP. Plays an important role in cellular energy homeostasis and in adenine nucleotide metabolism. The protein is Adenylate kinase of Solidesulfovibrio magneticus (strain ATCC 700980 / DSM 13731 / RS-1) (Desulfovibrio magneticus).